The primary structure comprises 939 residues: UvrABC system protein A (939 aa).

32–39 (GLSGSGKS) provides a ligand contact to ATP. The C4-type zinc finger occupies 252 to 279 (CPDCGISIGEISPSMFSFNAPFGKCDVC). 2 ABC transporter domains span residues 309–588 (WGEG…KESI) and 608–936 (AGKN…QYLK). ATP is bound at residue 640–647 (GVSGSGKS). A C4-type zinc finger spans residues 739 to 765 (CEACKGDGIVRIEMQFLSDVYVPCDVC).

Belongs to the ABC transporter superfamily. UvrA family. Forms a heterotetramer with UvrB during the search for lesions.

It is found in the cytoplasm. Functionally, the UvrABC repair system catalyzes the recognition and processing of DNA lesions. UvrA is an ATPase and a DNA-binding protein. A damage recognition complex composed of 2 UvrA and 2 UvrB subunits scans DNA for abnormalities. When the presence of a lesion has been verified by UvrB, the UvrA molecules dissociate. The polypeptide is UvrABC system protein A (Clostridium acetobutylicum (strain ATCC 824 / DSM 792 / JCM 1419 / IAM 19013 / LMG 5710 / NBRC 13948 / NRRL B-527 / VKM B-1787 / 2291 / W)).